A 214-amino-acid polypeptide reads, in one-letter code: Peptidyl-tRNA hydrolase (214 aa).

Tyr14 is a tRNA binding site. The active-site Proton acceptor is the His19. The tRNA site is built by Tyr64, Asn66, and Asn113. The interval 184 to 214 is disordered; sequence RINAPPPKPEKKRGSETSDPSAESADHAGGG.

It belongs to the PTH family. Monomer.

It localises to the cytoplasm. The catalysed reaction is an N-acyl-L-alpha-aminoacyl-tRNA + H2O = an N-acyl-L-amino acid + a tRNA + H(+). In terms of biological role, hydrolyzes ribosome-free peptidyl-tRNAs (with 1 or more amino acids incorporated), which drop off the ribosome during protein synthesis, or as a result of ribosome stalling. Functionally, catalyzes the release of premature peptidyl moieties from peptidyl-tRNA molecules trapped in stalled 50S ribosomal subunits, and thus maintains levels of free tRNAs and 50S ribosomes. In Roseiflexus castenholzii (strain DSM 13941 / HLO8), this protein is Peptidyl-tRNA hydrolase.